The sequence spans 476 residues: Eukaryotic translation initiation factor 3 subunit L (476 aa).

The region spanning 257-452 is the PCI domain; sequence DAIRMFSHIL…DLDYALEKDL (196 aa).

This sequence belongs to the eIF-3 subunit L family. As to quaternary structure, component of the eukaryotic translation initiation factor 3 (eIF-3) complex.

It localises to the cytoplasm. Functionally, component of the eukaryotic translation initiation factor 3 (eIF-3) complex, which is involved in protein synthesis of a specialized repertoire of mRNAs and, together with other initiation factors, stimulates binding of mRNA and methionyl-tRNAi to the 40S ribosome. The eIF-3 complex specifically targets and initiates translation of a subset of mRNAs involved in cell proliferation. The polypeptide is Eukaryotic translation initiation factor 3 subunit L (Aspergillus terreus (strain NIH 2624 / FGSC A1156)).